Consider the following 120-residue polypeptide: Small ribosomal subunit protein uS13 (120 aa).

Residues 93–120 (GLPVRGQNTKNNARTRKGPRRTVANKKK) are disordered. Positions 105 to 120 (ARTRKGPRRTVANKKK) are enriched in basic residues.

The protein belongs to the universal ribosomal protein uS13 family. As to quaternary structure, part of the 30S ribosomal subunit. Has been shown to cross-link to S19 forming a loose heterodimer. Forms two bridges to the 50S subunit in the 70S ribosome.

In terms of biological role, located at the top of the head of the 30S subunit, it contacts several helices of the 16S rRNA. In the 70S ribosome it contacts the 23S rRNA (bridge B1a) and protein L5 of the 50S subunit (bridge B1b), connecting the 2 subunits; these bridges are implicated in subunit movement. Contacts the tRNA in the A and P-sites. This chain is Small ribosomal subunit protein uS13 (rpsM), found in Geobacillus stearothermophilus (Bacillus stearothermophilus).